We begin with the raw amino-acid sequence, 344 residues long: Ferrochelatase (344 aa).

Residues H191 and E271 each contribute to the Fe cation site.

The protein belongs to the ferrochelatase family.

The protein localises to the cytoplasm. The catalysed reaction is heme b + 2 H(+) = protoporphyrin IX + Fe(2+). It functions in the pathway porphyrin-containing compound metabolism; protoheme biosynthesis; protoheme from protoporphyrin-IX: step 1/1. In terms of biological role, catalyzes the ferrous insertion into protoporphyrin IX. The chain is Ferrochelatase from Pelagibacter ubique (strain HTCC1062).